A 351-amino-acid polypeptide reads, in one-letter code: Prostaglandin reductase 2 (351 aa).

99–100 (FY) provides a ligand contact to substrate. Residues 165-168 (GACG), Lys-192, Tyr-208, Asn-231, 253-259 (CGQISQY), 287-289 (FLV), and Asn-337 contribute to the NADP(+) site. Residue 288–290 (LVL) coordinates substrate.

Belongs to the NADP-dependent oxidoreductase L4BD family. As to quaternary structure, monomer.

It is found in the cytoplasm. It catalyses the reaction 13,14-dihydro-15-oxo-prostaglandin E2 + NAD(+) = 15-oxoprostaglandin E2 + NADH + H(+). It carries out the reaction 13,14-dihydro-15-oxo-prostaglandin E2 + NADP(+) = 15-oxoprostaglandin E2 + NADPH + H(+). The enzyme catalyses 13,14-dihydro-15-oxo-PGF2alpha + NADP(+) = 15-oxoprostaglandin F2alpha + NADPH + H(+). The catalysed reaction is 13,14-dihydro-15-oxo-prostaglandin E1 + NADP(+) = 15-oxoprostaglandin E1 + NADPH + H(+). It catalyses the reaction 13,14-dihydro-15-oxo-prostaglandin F1alpha + NADP(+) = 15-oxoprostaglandin F1alpha + NADPH + H(+). Functions as 15-oxo-prostaglandin 13-reductase and acts on 15-keto-PGE1, 15-keto-PGE2, 15-keto-PGE1-alpha and 15-keto-PGE2-alpha with highest activity towards 15-keto-PGE2. Overexpression represses transcriptional activity of PPARG and inhibits adipocyte differentiation. This chain is Prostaglandin reductase 2 (PTGR2), found in Bos taurus (Bovine).